The primary structure comprises 559 residues: Frizzled-5 (559 aa).

Residues 1–26 (MGSFRSGVFALSFVVLLLDYFAPAQA) form the signal peptide. The Extracellular segment spans residues 27–220 (ASKAIVCQEI…QPYFTQDEKM (194 aa)). Residues 28-149 (SKAIVCQEIT…GDPDTLCMYY (122 aa)) form the FZ domain. Cystine bridges form between Cys-33–Cys-94, Cys-41–Cys-87, Cys-78–Cys-116, Cys-105–Cys-146, and Cys-109–Cys-133. An N-linked (GlcNAc...) asparagine glycan is attached at Asn-47. N-linked (GlcNAc...) asparagine glycosylation is present at Asn-150. Residues 221–241 (FVTFWIGLWSILCFISTFTTV) traverse the membrane as a helical segment. The Cytoplasmic segment spans residues 242-257 (ATFLIDMERFRYPERP). Residues 258 to 278 (IIFLSACYLFVSIGYVVRLIV) form a helical membrane-spanning segment. The Extracellular portion of the chain corresponds to 279-301 (GHENVACNKDHIHYETTGPALCT). The helical transmembrane segment at 302–322 (IVFLLIYFFGMASSIWWVILT) threads the bilayer. The Cytoplasmic portion of the chain corresponds to 323–343 (FTWFLAAGMKWGNEAIASYSQ). The chain crosses the membrane as a helical span at residues 344-364 (YFHMAAWLIPSVKSIAVLALS). Topologically, residues 365 to 387 (SVDGDPVAGICYVGNQNLDNLRG) are extracellular. A helical membrane pass occupies residues 388-408 (FVLAPLVVYLFSGTMFLLAGF). Residues 409–434 (VSLFRIRSVIKQGGTKTDKLEKLMIR) are Cytoplasmic-facing. Residues 435–455 (IGIFSVLYTVPATIVVACYIY) form a helical membrane-spanning segment. Residues 456–483 (EQHYREHWEKTHNCSCPGDKQRYRPDYA) are Extracellular-facing. N-linked (GlcNAc...) asparagine glycosylation is present at Asn-468. A helical membrane pass occupies residues 484–504 (VFMLKYLMCLVVGITSGVWIW). Over 505 to 559 (SGKTLESWKRFTGRCCRNSKPINASAYSEASRALTPRTGLSNLTLPHKQVPLSHV) the chain is Cytoplasmic. The short motif at 507 to 512 (KTLESW) is the Lys-Thr-X-X-X-Trp motif, mediates interaction with the PDZ domain of Dvl family members element. The PDZ-binding signature appears at 557–559 (SHV).

It belongs to the G-protein coupled receptor Fz/Smo family. In terms of tissue distribution, expressed in retina.

The protein resides in the cell membrane. It is found in the golgi apparatus membrane. Receptor for Wnt proteins that functions in the canonical Wnt/beta-catenin signaling pathway. The canonical Wnt/beta-catenin signaling pathway leads to the activation of disheveled proteins, inhibition of GSK-3 kinase, nuclear accumulation of beta-catenin and activation of Wnt target genes. A second signaling pathway involving PKC and calcium fluxes has been seen for some family members, but it is not yet clear if it represents a distinct pathway or if it can be integrated in the canonical pathway, as PKC seems to be required for Wnt-mediated inactivation of GSK-3 kinase. Both pathways seem to involve interactions with G-proteins. May be involved in transduction and intercellular transmission of polarity information during tissue morphogenesis and/or in differentiated tissues. This is Frizzled-5 (fzd5) from Xenopus laevis (African clawed frog).